We begin with the raw amino-acid sequence, 569 residues long: Proline--tRNA ligase (569 aa).

The protein belongs to the class-II aminoacyl-tRNA synthetase family. ProS type 1 subfamily. As to quaternary structure, homodimer.

The protein localises to the cytoplasm. The catalysed reaction is tRNA(Pro) + L-proline + ATP = L-prolyl-tRNA(Pro) + AMP + diphosphate. Catalyzes the attachment of proline to tRNA(Pro) in a two-step reaction: proline is first activated by ATP to form Pro-AMP and then transferred to the acceptor end of tRNA(Pro). As ProRS can inadvertently accommodate and process non-cognate amino acids such as alanine and cysteine, to avoid such errors it has two additional distinct editing activities against alanine. One activity is designated as 'pretransfer' editing and involves the tRNA(Pro)-independent hydrolysis of activated Ala-AMP. The other activity is designated 'posttransfer' editing and involves deacylation of mischarged Ala-tRNA(Pro). The misacylated Cys-tRNA(Pro) is not edited by ProRS. The protein is Proline--tRNA ligase of Lactiplantibacillus plantarum (strain ATCC BAA-793 / NCIMB 8826 / WCFS1) (Lactobacillus plantarum).